A 397-amino-acid polypeptide reads, in one-letter code: UPF0761 membrane protein Kkor_1635 (397 aa).

Helical transmembrane passes span M36–F56, N92–I112, I132–A152, I168–V188, I201–V221, and I237–V257.

This sequence belongs to the UPF0761 family.

Its subcellular location is the cell inner membrane. This chain is UPF0761 membrane protein Kkor_1635, found in Kangiella koreensis (strain DSM 16069 / JCM 12317 / KCTC 12182 / SW-125).